We begin with the raw amino-acid sequence, 283 residues long: Protease HtpX (283 aa).

2 consecutive transmembrane segments (helical) span residues 4–24 (IALFLATNFAVMIVLGIILSV) and 33–53 (GGILIMSVLFGFAGSLISLFM). His139 lines the Zn(2+) pocket. The active site involves Glu140. His143 contacts Zn(2+). A run of 2 helical transmembrane segments spans residues 147–167 (GDMVTMTLLQGVLNTFVIFLS) and 192–212 (FLVSMVLEILFGVLATIIAMW). Glu218 contributes to the Zn(2+) binding site.

Belongs to the peptidase M48B family. Zn(2+) is required as a cofactor.

The protein localises to the cell inner membrane. This Glaesserella parasuis serovar 5 (strain SH0165) (Haemophilus parasuis) protein is Protease HtpX.